The primary structure comprises 87 residues: RNA-binding protein Hfq (87 aa).

Residues 9 to 68 (DPFLNALRRERIPVSIYLVNGIKLQGQIESFDQFVILLKNTVNQMVYKHAISTVVPARPV) form the Sm domain. Positions 65–87 (ARPVSHHSGDRPASDRPAEKSEE) are disordered. Residues 71–87 (HSGDRPASDRPAEKSEE) are compositionally biased toward basic and acidic residues.

Belongs to the Hfq family.

In terms of biological role, RNA chaperone that binds small regulatory RNA (sRNAs) and mRNAs to facilitate mRNA translational regulation in response to envelope stress, environmental stress and changes in metabolite concentrations. Also binds with high specificity to tRNAs. Essential for virulence in the suckling mouse model of cholera pathogenesis. The sequence is that of RNA-binding protein Hfq from Vibrio cholerae serotype O1 (strain ATCC 39315 / El Tor Inaba N16961).